A 57-amino-acid polypeptide reads, in one-letter code: uncharacterized protein (57 aa).

The interval 31-57 is disordered; it reads HHQTSSFNPMPSEVSLHTSHNFPHTTF. Residues 33 to 57 show a composition bias toward polar residues; it reads QTSSFNPMPSEVSLHTSHNFPHTTF.

This is an uncharacterized protein from Invertebrate iridescent virus 6 (IIV-6).